A 100-amino-acid polypeptide reads, in one-letter code: Urease subunit gamma (100 aa).

This sequence belongs to the urease gamma subunit family. Heterotrimer of UreA (gamma), UreB (beta) and UreC (alpha) subunits. Three heterotrimers associate to form the active enzyme.

The protein localises to the cytoplasm. The catalysed reaction is urea + 2 H2O + H(+) = hydrogencarbonate + 2 NH4(+). It participates in nitrogen metabolism; urea degradation; CO(2) and NH(3) from urea (urease route): step 1/1. The chain is Urease subunit gamma from Stutzerimonas stutzeri (strain A1501) (Pseudomonas stutzeri).